Reading from the N-terminus, the 356-residue chain is Protein-glutamate methylesterase/protein-glutamine glutaminase 2 (356 aa).

Residues 4–121 enclose the Response regulatory domain; the sequence is RALVVDDSAL…SQSMPEMAEE (118 aa). A 4-aspartylphosphate modification is found at aspartate 55. The 196-residue stretch at 161 to 356 folds into the CheB-type methylesterase domain; the sequence is KAAPRNILAI…MAEEIIRIIG (196 aa). Catalysis depends on residues serine 173, histidine 200, and aspartate 300.

It belongs to the CheB family. Post-translationally, phosphorylated by CheA. Phosphorylation of the N-terminal regulatory domain activates the methylesterase activity.

Its subcellular location is the cytoplasm. It carries out the reaction [protein]-L-glutamate 5-O-methyl ester + H2O = L-glutamyl-[protein] + methanol + H(+). The enzyme catalyses L-glutaminyl-[protein] + H2O = L-glutamyl-[protein] + NH4(+). In terms of biological role, involved in chemotaxis. Part of a chemotaxis signal transduction system that modulates chemotaxis in response to various stimuli. Catalyzes the demethylation of specific methylglutamate residues introduced into the chemoreceptors (methyl-accepting chemotaxis proteins or MCP) by CheR. Also mediates the irreversible deamidation of specific glutamine residues to glutamic acid. The sequence is that of Protein-glutamate methylesterase/protein-glutamine glutaminase 2 from Methanosarcina acetivorans (strain ATCC 35395 / DSM 2834 / JCM 12185 / C2A).